The sequence spans 239 residues: Cysteine-rich venom protein natrin-1 (239 aa).

The signal sequence occupies residues 1-18; that stretch reads MIAFSLLCFAAVLQQSFG. The region spanning 37 to 165 is the SCP domain; sequence VDLHNSLRRR…AWSYFYVCQY (129 aa). 8 disulfides stabilise this stretch: Cys-74–Cys-152, Cys-91–Cys-166, Cys-147–Cys-163, Cys-185–Cys-192, Cys-188–Cys-197, Cys-201–Cys-234, Cys-210–Cys-228, and Cys-219–Cys-232. Residues 201 to 234 form the ShKT domain; the sequence is CTIYNKLTNCDSLLKQSSCQDDWIKSNCPASCFC.

As to expression, expressed by the venom gland.

It is found in the secreted. Its function is as follows. Inhibits calcium-activated potassium channels (KCa1.1/KCNMA1), voltage-gated potassium channel Kv1.3/KCNA3, and the calcium release channel/ryanodine receptor (RyR). Binds specifically to type 1 RyR (RyR1) from skeletal muscle. Inhibit both the binding of ryanodine to RyR1, and RyR1's calcium-channel activity. Inhibits carbachol-induced muscle contraction and weakly blocks muscle contraction evoked by potassium. In Naja atra (Chinese cobra), this protein is Cysteine-rich venom protein natrin-1.